We begin with the raw amino-acid sequence, 394 residues long: Argininosuccinate synthase (394 aa).

8–16 lines the ATP pocket; it reads AYSGGLDTS. Residues Tyr86 and Ser91 each contribute to the L-citrulline site. Gly116 serves as a coordination point for ATP. Residues Thr118, Asn122, and Asp123 each contribute to the L-aspartate site. Asn122 contacts L-citrulline. Arg126, Ser172, Ser181, Glu257, and Tyr269 together coordinate L-citrulline.

The protein belongs to the argininosuccinate synthase family. Type 1 subfamily. In terms of assembly, homotetramer.

Its subcellular location is the cytoplasm. The catalysed reaction is L-citrulline + L-aspartate + ATP = 2-(N(omega)-L-arginino)succinate + AMP + diphosphate + H(+). It participates in amino-acid biosynthesis; L-arginine biosynthesis; L-arginine from L-ornithine and carbamoyl phosphate: step 2/3. The polypeptide is Argininosuccinate synthase (Methanosarcina acetivorans (strain ATCC 35395 / DSM 2834 / JCM 12185 / C2A)).